The primary structure comprises 598 residues: Elongation factor 4 (598 aa).

The tr-type G domain maps to 4–186 (SRLRNFSIIA…EIVKKIPPPK (183 aa)). GTP-binding positions include 16 to 21 (DHGKST) and 133 to 136 (NKID).

This sequence belongs to the TRAFAC class translation factor GTPase superfamily. Classic translation factor GTPase family. LepA subfamily.

The protein resides in the cell inner membrane. The catalysed reaction is GTP + H2O = GDP + phosphate + H(+). Its function is as follows. Required for accurate and efficient protein synthesis under certain stress conditions. May act as a fidelity factor of the translation reaction, by catalyzing a one-codon backward translocation of tRNAs on improperly translocated ribosomes. Back-translocation proceeds from a post-translocation (POST) complex to a pre-translocation (PRE) complex, thus giving elongation factor G a second chance to translocate the tRNAs correctly. Binds to ribosomes in a GTP-dependent manner. This is Elongation factor 4 from Pelobacter propionicus (strain DSM 2379 / NBRC 103807 / OttBd1).